The chain runs to 308 residues: UDP-N-acetylenolpyruvoylglucosamine reductase (308 aa).

The FAD-binding PCMH-type domain occupies 33–197 (TGGNADFYLS…LEASFNLAPG (165 aa)). The active site involves Arg-176. Ser-226 serves as the catalytic Proton donor. Glu-296 is an active-site residue.

The protein belongs to the MurB family. The cofactor is FAD.

The protein resides in the cytoplasm. It catalyses the reaction UDP-N-acetyl-alpha-D-muramate + NADP(+) = UDP-N-acetyl-3-O-(1-carboxyvinyl)-alpha-D-glucosamine + NADPH + H(+). It functions in the pathway cell wall biogenesis; peptidoglycan biosynthesis. Cell wall formation. This is UDP-N-acetylenolpyruvoylglucosamine reductase from Staphylococcus carnosus (strain TM300).